The following is a 405-amino-acid chain: Glucose-1-phosphate adenylyltransferase (405 aa).

Residues tyrosine 96, glycine 161, 176 to 177 (EK), and serine 194 each bind alpha-D-glucose 1-phosphate.

The protein belongs to the bacterial/plant glucose-1-phosphate adenylyltransferase family. As to quaternary structure, homotetramer.

It catalyses the reaction alpha-D-glucose 1-phosphate + ATP + H(+) = ADP-alpha-D-glucose + diphosphate. It participates in glycan biosynthesis; glycogen biosynthesis. In terms of biological role, involved in the biosynthesis of ADP-glucose, a building block required for the elongation reactions to produce glycogen. Catalyzes the reaction between ATP and alpha-D-glucose 1-phosphate (G1P) to produce pyrophosphate and ADP-Glc. This Aliivibrio fischeri (strain MJ11) (Vibrio fischeri) protein is Glucose-1-phosphate adenylyltransferase.